The following is a 431-amino-acid chain: TDP-daunosamine transferase DnrS (431 aa).

An N-terminal signal peptide occupies residues 1 to 23; it reads MKVLVTAFAMDAHFNGVVPLAWA.

This sequence belongs to the glycosyltransferase 28 family.

It carries out the reaction dTDP-beta-L-daunosamine + epsilon-rhodomycinone = rhodomycin D + dTDP + H(+). The protein operates within antibiotic biosynthesis; daunorubicin biosynthesis. It functions in the pathway antibiotic biosynthesis; carminomycin biosynthesis. Involved in the biosynthesis of the anthracyclines carminomycin and daunorubicin (daunomycin) which are aromatic polyketide antibiotics that exhibit high cytotoxicity and are widely applied in the chemotherapy of a variety of cancers. Catalyzes the addition of the TDP activated glycoside, L-daunosamine-TDP (2,3,6-trideoxy-3-aminohexose-TDP) at position C-7 of epsilon-rhodomycinone to yield rhodomycin D. Glycosylation is a prerequisite for biological activity of anthracyclines and requires DnrQ which seems to act as an activator. This is TDP-daunosamine transferase DnrS (dnrS) from Streptomyces peucetius.